A 349-amino-acid chain; its full sequence is Phosphoribosylformylglycinamidine cyclo-ligase (349 aa).

Belongs to the AIR synthase family.

It is found in the cytoplasm. The catalysed reaction is 2-formamido-N(1)-(5-O-phospho-beta-D-ribosyl)acetamidine + ATP = 5-amino-1-(5-phospho-beta-D-ribosyl)imidazole + ADP + phosphate + H(+). The protein operates within purine metabolism; IMP biosynthesis via de novo pathway; 5-amino-1-(5-phospho-D-ribosyl)imidazole from N(2)-formyl-N(1)-(5-phospho-D-ribosyl)glycinamide: step 2/2. The chain is Phosphoribosylformylglycinamidine cyclo-ligase from Lawsonia intracellularis (strain PHE/MN1-00).